A 117-amino-acid polypeptide reads, in one-letter code: Large ribosomal subunit protein uL22 (117 aa).

It belongs to the universal ribosomal protein uL22 family. Part of the 50S ribosomal subunit.

This protein binds specifically to 23S rRNA; its binding is stimulated by other ribosomal proteins, e.g. L4, L17, and L20. It is important during the early stages of 50S assembly. It makes multiple contacts with different domains of the 23S rRNA in the assembled 50S subunit and ribosome. In terms of biological role, the globular domain of the protein is located near the polypeptide exit tunnel on the outside of the subunit, while an extended beta-hairpin is found that lines the wall of the exit tunnel in the center of the 70S ribosome. The protein is Large ribosomal subunit protein uL22 of Synechococcus elongatus (strain ATCC 33912 / PCC 7942 / FACHB-805) (Anacystis nidulans R2).